The primary structure comprises 571 residues: 2-succinyl-5-enolpyruvyl-6-hydroxy-3-cyclohexene-1-carboxylate synthase (571 aa).

It belongs to the TPP enzyme family. MenD subfamily. Homodimer. Mg(2+) is required as a cofactor. The cofactor is Mn(2+). It depends on thiamine diphosphate as a cofactor.

The catalysed reaction is isochorismate + 2-oxoglutarate + H(+) = 5-enolpyruvoyl-6-hydroxy-2-succinyl-cyclohex-3-ene-1-carboxylate + CO2. It functions in the pathway quinol/quinone metabolism; 1,4-dihydroxy-2-naphthoate biosynthesis; 1,4-dihydroxy-2-naphthoate from chorismate: step 2/7. Its pathway is quinol/quinone metabolism; menaquinone biosynthesis. Its function is as follows. Catalyzes the thiamine diphosphate-dependent decarboxylation of 2-oxoglutarate and the subsequent addition of the resulting succinic semialdehyde-thiamine pyrophosphate anion to isochorismate to yield 2-succinyl-5-enolpyruvyl-6-hydroxy-3-cyclohexene-1-carboxylate (SEPHCHC). The polypeptide is 2-succinyl-5-enolpyruvyl-6-hydroxy-3-cyclohexene-1-carboxylate synthase (Lysinibacillus sphaericus (strain C3-41)).